The sequence spans 267 residues: NADP-dependent mannitol dehydrogenase (267 aa).

NADP(+)-binding residues include asparagine 108 and lysine 141. Catalysis depends on serine 160, which acts as the Proton donor. NADP(+)-binding residues include tyrosine 175, lysine 179, isoleucine 207, and threonine 209. The active-site Proton acceptor is tyrosine 175. The active-site Lowers pKa of active site Tyr is lysine 179.

The protein belongs to the short-chain dehydrogenases/reductases (SDR) family. Exists as monomer, dimer and tetramer.

It catalyses the reaction D-mannitol + NADP(+) = D-fructose + NADPH + H(+). In terms of biological role, interconverts D-mannitol and D-fructose. Not active with fructose 6-phosphate or NADH. This is NADP-dependent mannitol dehydrogenase from Davidiella tassiana (Mycosphaerella tassiana).